A 303-amino-acid polypeptide reads, in one-letter code: Sulfate adenylyltransferase subunit 2 (303 aa).

This sequence belongs to the PAPS reductase family. CysD subfamily. Heterodimer composed of CysD, the smaller subunit, and CysN.

It catalyses the reaction sulfate + ATP + H(+) = adenosine 5'-phosphosulfate + diphosphate. The protein operates within sulfur metabolism; hydrogen sulfide biosynthesis; sulfite from sulfate: step 1/3. In terms of biological role, with CysN forms the ATP sulfurylase (ATPS) that catalyzes the adenylation of sulfate producing adenosine 5'-phosphosulfate (APS) and diphosphate, the first enzymatic step in sulfur assimilation pathway. APS synthesis involves the formation of a high-energy phosphoric-sulfuric acid anhydride bond driven by GTP hydrolysis by CysN coupled to ATP hydrolysis by CysD. This is Sulfate adenylyltransferase subunit 2 from Phocaeicola vulgatus (strain ATCC 8482 / DSM 1447 / JCM 5826 / CCUG 4940 / NBRC 14291 / NCTC 11154) (Bacteroides vulgatus).